The following is an 89-amino-acid chain: Sec-independent protein translocase protein TatA (89 aa).

Residues 1-21 form a helical membrane-spanning segment; it reads MGGISIWQLLIIAVIVVLLFG. The disordered stretch occupies residues 65–89; the sequence is ADKQADTNQEQAKTEDAKRHDKEQV. Basic and acidic residues predominate over residues 76 to 89; that stretch reads AKTEDAKRHDKEQV.

This sequence belongs to the TatA/E family. The Tat system comprises two distinct complexes: a TatABC complex, containing multiple copies of TatA, TatB and TatC subunits, and a separate TatA complex, containing only TatA subunits. Substrates initially bind to the TatABC complex, which probably triggers association of the separate TatA complex to form the active translocon.

Its subcellular location is the cell inner membrane. Functionally, part of the twin-arginine translocation (Tat) system that transports large folded proteins containing a characteristic twin-arginine motif in their signal peptide across membranes. TatA could form the protein-conducting channel of the Tat system. The sequence is that of Sec-independent protein translocase protein TatA from Shigella flexneri.